A 198-amino-acid polypeptide reads, in one-letter code: Ribonuclease HII (198 aa).

An RNase H type-2 domain is found at 6-195 (RRVAGVDEVG…VHHMLYQDKN (190 aa)). Aspartate 12, glutamate 13, and aspartate 103 together coordinate a divalent metal cation.

It belongs to the RNase HII family. Requires Mn(2+) as cofactor. The cofactor is Mg(2+).

It is found in the cytoplasm. It carries out the reaction Endonucleolytic cleavage to 5'-phosphomonoester.. Endonuclease that specifically degrades the RNA of RNA-DNA hybrids. The protein is Ribonuclease HII of Roseobacter denitrificans (strain ATCC 33942 / OCh 114) (Erythrobacter sp. (strain OCh 114)).